Consider the following 248-residue polypeptide: MWSHFGTALSFLTLFRLPFTSPRTLTPQELAESFSFFPLVGLILGFCYALPARVLSGVVPSLLLAVAITALTAVLTRALHLDGLADLADGVGGGYDPERRLEIMKDSRTGAFGALAIALAVAFKVAALDAVIRAGSFLPLLLVPVVSRLAMVLAAYRSPYARKEGGLGKPFLEHIARRHLLTALGLTAVSAFLVQPVFGLCALVLAAGTVPAFRLLCRRWLGGMTGDALGALNEIVEVLLLSAAACMY.

5 helical membrane-spanning segments follow: residues 30 to 50 (LAES…CYAL), 54 to 74 (VLSG…LTAV), 112 to 132 (FGAL…DAVI), 134 to 154 (AGSF…MVLA), and 188 to 208 (AVSA…LAAG).

Belongs to the CobS family. It depends on Mg(2+) as a cofactor.

The protein resides in the cell inner membrane. It carries out the reaction alpha-ribazole + adenosylcob(III)inamide-GDP = adenosylcob(III)alamin + GMP + H(+). It catalyses the reaction alpha-ribazole 5'-phosphate + adenosylcob(III)inamide-GDP = adenosylcob(III)alamin 5'-phosphate + GMP + H(+). The protein operates within cofactor biosynthesis; adenosylcobalamin biosynthesis; adenosylcobalamin from cob(II)yrinate a,c-diamide: step 7/7. Joins adenosylcobinamide-GDP and alpha-ribazole to generate adenosylcobalamin (Ado-cobalamin). Also synthesizes adenosylcobalamin 5'-phosphate from adenosylcobinamide-GDP and alpha-ribazole 5'-phosphate. The sequence is that of Adenosylcobinamide-GDP ribazoletransferase from Syntrophobacter fumaroxidans (strain DSM 10017 / MPOB).